The chain runs to 2492 residues: Talin-A (2492 aa).

The region spanning 84–365 (RPQKFKLLDG…GYIEIIMKAR (282 aa)) is the FERM domain. Residues 2250–2492 (EEDNVLEDLE…NSRKQNYNKN (243 aa)) form the I/LWEQ domain.

It localises to the cytoplasm. The protein resides in the cytoskeleton. The protein localises to the cell cortex. Functionally, actin-binding protein that may be involved in the control of cell motility and chemotaxis. The polypeptide is Talin-A (talA) (Dictyostelium discoideum (Social amoeba)).